Consider the following 261-residue polypeptide: Potassium/proton antiporter CemA (261 aa).

3 helical membrane-spanning segments follow: residues 138–158 (IISH…YLIL), 184–204 (FLIL…GWEL), and 221–241 (IISG…KYWI).

Belongs to the CemA family.

The protein localises to the plastid. It is found in the chloroplast inner membrane. The enzyme catalyses K(+)(in) + H(+)(out) = K(+)(out) + H(+)(in). In terms of biological role, contributes to K(+)/H(+) antiport activity by supporting proton efflux to control proton extrusion and homeostasis in chloroplasts in a light-dependent manner to modulate photosynthesis. Prevents excessive induction of non-photochemical quenching (NPQ) under continuous-light conditions. Indirectly promotes efficient inorganic carbon uptake into chloroplasts. The polypeptide is Potassium/proton antiporter CemA (Pinus koraiensis (Korean pine)).